The following is a 716-amino-acid chain: Fatty acid oxidation complex subunit alpha (716 aa).

The segment at methionine 1–alanine 189 is enoyl-CoA hydratase/isomerase. Residue aspartate 296 participates in substrate binding. The segment at lysine 311–alanine 716 is 3-hydroxyacyl-CoA dehydrogenase. NAD(+) contacts are provided by residues methionine 324, aspartate 343, valine 400 to glutamate 402, lysine 407, and serine 429. The For 3-hydroxyacyl-CoA dehydrogenase activity role is filled by histidine 450. Asparagine 453 is a binding site for NAD(+). 2 residues coordinate substrate: asparagine 500 and tyrosine 660.

This sequence in the N-terminal section; belongs to the enoyl-CoA hydratase/isomerase family. In the C-terminal section; belongs to the 3-hydroxyacyl-CoA dehydrogenase family. As to quaternary structure, heterotetramer of two alpha chains (FadB) and two beta chains (FadA).

It catalyses the reaction a (3S)-3-hydroxyacyl-CoA + NAD(+) = a 3-oxoacyl-CoA + NADH + H(+). It carries out the reaction a (3S)-3-hydroxyacyl-CoA = a (2E)-enoyl-CoA + H2O. The enzyme catalyses a 4-saturated-(3S)-3-hydroxyacyl-CoA = a (3E)-enoyl-CoA + H2O. The catalysed reaction is (3S)-3-hydroxybutanoyl-CoA = (3R)-3-hydroxybutanoyl-CoA. It catalyses the reaction a (3Z)-enoyl-CoA = a 4-saturated (2E)-enoyl-CoA. It carries out the reaction a (3E)-enoyl-CoA = a 4-saturated (2E)-enoyl-CoA. The protein operates within lipid metabolism; fatty acid beta-oxidation. Functionally, involved in the aerobic and anaerobic degradation of long-chain fatty acids via beta-oxidation cycle. Catalyzes the formation of 3-oxoacyl-CoA from enoyl-CoA via L-3-hydroxyacyl-CoA. It can also use D-3-hydroxyacyl-CoA and cis-3-enoyl-CoA as substrate. This Shewanella baltica (strain OS195) protein is Fatty acid oxidation complex subunit alpha.